The primary structure comprises 2684 residues: Teneurin-1 (2684 aa).

Disordered regions lie at residues 1-37, 127-156, and 170-204; these read MFQH…HDYT, TTSS…PTYS, and GTNQ…KKFD. Residues 1–216 lie on the Cytoplasmic side of the membrane; it reads MFQHRTTNAQ…SDTCSRWPSK (216 aa). Positions 11 to 24 are enriched in pro residues; sequence GPPPNRPMPRPPAG. Low complexity predominate over residues 127-136; the sequence is TTSSTLSPAS. A helical transmembrane segment spans residues 217-237; the sequence is WNILLAAALLVALFVICILLF. Over 238–2684 the chain is Extracellular; that stretch reads RAPNYVYTQP…VHSWKFRKSE (2447 aa). 2 consecutive EGF-like domains span residues 463-499 and 501-534; these read TGRT…KECE and RHNW…EACE. Cystine bridges form between C467–C476, C472–C487, C489–C498, C505–C516, C510–C522, and C524–C533. The disordered stretch occupies residues 576 to 614; the sequence is PQAQSPPRRGQEPTESSKTRKAQVKPTPTSEKKKESREL. Composition is skewed to basic and acidic residues over residues 584–593 and 605–614; these read RGQEPTESSK and SEKKKESREL. EGF-like domains are found at residues 650–684 and 716–753; these read DSVD…SNCT and AIDG…VDCS. Cystine bridges form between C654–C666, C659–C672, C674–C683, C720–C730, C724–C741, and C743–C752. NHL repeat units lie at residues 1276–1317, 1334–1378, 1398–1441, and 1470–1513; these read DSCG…IDTT, RTCA…VVHD, SASA…VRKL, and AVSL…VSAR.

The protein belongs to the tenascin family. Teneurin subfamily. Probably proteolytically processed to generate a N-terminal intracellular domain. As to expression, isoform 1 is mainly expressed in organs derived from the mesoderm, including the pharynx, vulva muscles, gonad distal tip cells, intestine and several tail neurons. Isoform 2 is mainly expressed in the organs derived from the ectoderm, including hypodermal cells, head ganglion neurons and tail neurons (at protein level).

It localises to the nucleus. Its subcellular location is the cell membrane. The protein localises to the membrane. Functionally, plays a role in the gonadal basement membrane maintenance and/or adhesion early in development. Contributes to the guidance of pharyngeal neurons. This Caenorhabditis elegans protein is Teneurin-1 (ten-1).